Here is a 239-residue protein sequence, read N- to C-terminus: Phosphoribosylaminoimidazole-succinocarboxamide synthase (239 aa).

This sequence belongs to the SAICAR synthetase family.

The catalysed reaction is 5-amino-1-(5-phospho-D-ribosyl)imidazole-4-carboxylate + L-aspartate + ATP = (2S)-2-[5-amino-1-(5-phospho-beta-D-ribosyl)imidazole-4-carboxamido]succinate + ADP + phosphate + 2 H(+). Its pathway is purine metabolism; IMP biosynthesis via de novo pathway; 5-amino-1-(5-phospho-D-ribosyl)imidazole-4-carboxamide from 5-amino-1-(5-phospho-D-ribosyl)imidazole-4-carboxylate: step 1/2. This is Phosphoribosylaminoimidazole-succinocarboxamide synthase from Bacillus thuringiensis subsp. konkukian (strain 97-27).